Here is a 446-residue protein sequence, read N- to C-terminus: Tubulin beta chain (446 aa).

8 residues coordinate GTP: glutamine 11, glutamate 69, serine 138, glycine 142, threonine 143, glycine 144, asparagine 204, and asparagine 226. Glutamate 69 is a binding site for Mg(2+). A disordered region spans residues 421–446; the sequence is EYQQYQDAGIDEEEEEYEEELPEGEE. Positions 429–446 are enriched in acidic residues; the sequence is GIDEEEEEYEEELPEGEE.

Belongs to the tubulin family. Dimer of alpha and beta chains. A typical microtubule is a hollow water-filled tube with an outer diameter of 25 nm and an inner diameter of 15 nM. Alpha-beta heterodimers associate head-to-tail to form protofilaments running lengthwise along the microtubule wall with the beta-tubulin subunit facing the microtubule plus end conferring a structural polarity. Microtubules usually have 13 protofilaments but different protofilament numbers can be found in some organisms and specialized cells. Requires Mg(2+) as cofactor.

The protein resides in the cytoplasm. It is found in the cytoskeleton. Tubulin is the major constituent of microtubules, a cylinder consisting of laterally associated linear protofilaments composed of alpha- and beta-tubulin heterodimers. Microtubules grow by the addition of GTP-tubulin dimers to the microtubule end, where a stabilizing cap forms. Below the cap, tubulin dimers are in GDP-bound state, owing to GTPase activity of alpha-tubulin. The chain is Tubulin beta chain (TUB2) from Fusarium fujikuroi (Bakanae and foot rot disease fungus).